We begin with the raw amino-acid sequence, 564 residues long: DNA ligase B (564 aa).

K130 (N6-AMP-lysine intermediate) is an active-site residue.

The protein belongs to the NAD-dependent DNA ligase family. LigB subfamily.

The enzyme catalyses NAD(+) + (deoxyribonucleotide)n-3'-hydroxyl + 5'-phospho-(deoxyribonucleotide)m = (deoxyribonucleotide)n+m + AMP + beta-nicotinamide D-nucleotide.. In terms of biological role, catalyzes the formation of phosphodiester linkages between 5'-phosphoryl and 3'-hydroxyl groups in double-stranded DNA using NAD as a coenzyme and as the energy source for the reaction. The protein is DNA ligase B of Klebsiella pneumoniae subsp. pneumoniae (strain ATCC 700721 / MGH 78578).